The following is a 474-amino-acid chain: Mitogen-activated protein kinase pmk-3 (474 aa).

Low complexity predominate over residues 1 to 13 (MASVPSSSSLPVS). Positions 1–90 (MASVPSSSSL…EEEEDILSKP (90 aa)) are disordered. Residues 30–48 (KRSNNQSQPPESYEPNTWL) are compositionally biased toward polar residues. The span at 52–69 (REQEQQKKLAAENIKKQS) shows a compositional bias: basic and acidic residues. Positions 114-419 (YDVEPNSIEY…VEEAIQHPYL (306 aa)) constitute a Protein kinase domain. ATP is bound by residues 124–132 (LGGGSFGNV) and Lys-150. Asp-252 serves as the catalytic Proton acceptor. Position 285 is a phosphothreonine (Thr-285). The TXY motif lies at 285-287 (TQY). Tyr-287 carries the post-translational modification Phosphotyrosine.

The protein belongs to the protein kinase superfamily. CMGC Ser/Thr protein kinase family. MAP kinase subfamily. In terms of assembly, interacts with mak-2. May interact with vhp-1. May interact with uev-3. The cofactor is Mg(2+). Post-translationally, dually phosphorylated on Thr-285 and Tyr-287, which activates the enzyme. In terms of tissue distribution, expressed throughout the intestine.

The protein localises to the nucleus. It localises to the cytoplasm. It is found in the cell projection. Its subcellular location is the axon. The protein resides in the dendrite. The protein localises to the cilium. The catalysed reaction is L-seryl-[protein] + ATP = O-phospho-L-seryl-[protein] + ADP + H(+). It carries out the reaction L-threonyl-[protein] + ATP = O-phospho-L-threonyl-[protein] + ADP + H(+). With respect to regulation, activated by phosphorylation on threonine and tyrosine. Functionally, responds to activation by environmental stress and pro-inflammatory cytokines by phosphorylating downstream targets. Involved in axon regeneration after injury, probably downstream of dlk-1 and mkk-4 and upstream of mak-2. May phosphorylate mak-2. Plays a role in cilium length regulation, possibly by reducing rab-5 mediated endocytosis. Plays a role in the formation of muscle connections, also called muscle arm extensions, between the body wall and the motor axons in the dorsal and ventral cord. The polypeptide is Mitogen-activated protein kinase pmk-3 (pmk-3) (Caenorhabditis elegans).